Here is a 1392-residue protein sequence, read N- to C-terminus: DNA-directed RNA polymerase subunit beta (1392 aa).

The protein belongs to the RNA polymerase beta chain family. As to quaternary structure, the RNAP catalytic core consists of 2 alpha, 1 beta, 1 beta' and 1 omega subunit. When a sigma factor is associated with the core the holoenzyme is formed, which can initiate transcription.

It carries out the reaction RNA(n) + a ribonucleoside 5'-triphosphate = RNA(n+1) + diphosphate. In terms of biological role, DNA-dependent RNA polymerase catalyzes the transcription of DNA into RNA using the four ribonucleoside triphosphates as substrates. This is DNA-directed RNA polymerase subunit beta from Neisseria gonorrhoeae (strain ATCC 700825 / FA 1090).